The chain runs to 103 residues: Protein reprimo A (103 aa).

Residues 50–70 form a helical membrane-spanning segment; the sequence is IVQIAVMCVLSLTVVFGIFFL.

Belongs to the reprimo family.

The protein resides in the cytoplasm. It is found in the membrane. May be involved in the regulation of p53-dependent G2 arrest of the cell cycle. The protein is Protein reprimo A of Danio rerio (Zebrafish).